The following is a 98-amino-acid chain: Integration host factor subunit beta (98 aa).

The interval 59–98 (RTGRNPKTGESVTLPGKYVPHFKPGKEMRDRVNESIQSEG) is disordered. A compositionally biased stretch (basic and acidic residues) spans 82–91 (PGKEMRDRVN).

The protein belongs to the bacterial histone-like protein family. As to quaternary structure, heterodimer of an alpha and a beta chain.

This protein is one of the two subunits of integration host factor, a specific DNA-binding protein that functions in genetic recombination as well as in transcriptional and translational control. This Saccharophagus degradans (strain 2-40 / ATCC 43961 / DSM 17024) protein is Integration host factor subunit beta.